Here is a 189-residue protein sequence, read N- to C-terminus: Cancer/testis antigen family 45 member A10 (189 aa).

This sequence belongs to the CT45 family.

The protein resides in the nucleus. The sequence is that of Cancer/testis antigen family 45 member A10 from Homo sapiens (Human).